The sequence spans 43 residues: Oxygen-evolving enhancer protein 2 (43 aa).

This sequence belongs to the PsbP family.

Its subcellular location is the plastid. It localises to the chloroplast thylakoid membrane. May be involved in the regulation of photosystem II. In Physcomitrium patens (Spreading-leaved earth moss), this protein is Oxygen-evolving enhancer protein 2.